The following is a 416-amino-acid chain: MQITILGSGVIGVTTAYYLAKLGHEVTVVDREEGPALETSFANAGQVSPGYASPWAAPGIPFKAAKWLFQKHAPLVLRPTCDPVQYSWLLQMLANCTDSRYKVNKTRMVRVAEYARDCLVDLRKETGIEYDQRMQGTLQLFREQYQLDGIGKDIEVLRQDGVPFEVLDREGCAKVEPALARVKDKFVGGLRLPHDETGDCFKFTNALAKIAEGLGVKFRFGVNIKSLLMSGGKVSGVETSEGVLTADRYVVALGSYTPALVKSLGLNAPIYPVKGYSITAPIVDEDRAPVSTVLDESYKIAITRLGDRIRVGGMAEVSGFTTDLPAARRATLDLSVTDLFPGGDLKAATFWSGLRPMTPDSTPIIGATRYDNVFINAGHGTLGWTMSCGSGKLLADLISGNKPDIRADDLGISRYE.

3–17 (ITILGSGVIGVTTAY) is an FAD binding site.

It belongs to the DadA oxidoreductase family. It depends on FAD as a cofactor.

The catalysed reaction is a D-alpha-amino acid + A + H2O = a 2-oxocarboxylate + AH2 + NH4(+). Its pathway is amino-acid degradation; D-alanine degradation; NH(3) and pyruvate from D-alanine: step 1/1. In terms of biological role, oxidative deamination of D-amino acids. This is D-amino acid dehydrogenase from Brucella anthropi (strain ATCC 49188 / DSM 6882 / CCUG 24695 / JCM 21032 / LMG 3331 / NBRC 15819 / NCTC 12168 / Alc 37) (Ochrobactrum anthropi).